Reading from the N-terminus, the 1976-residue chain is Myosin-10 (1976 aa).

R18 bears the Omega-N-methylarginine mark. The 51-residue stretch at 31-81 (TAKKLVWIPSERHGFEAASIKEERGDEVLVELAENGKKAMVNKDDIQKMNP) folds into the Myosin N-terminal SH3-like domain. In terms of domain architecture, Myosin motor spans 85–783 (SKVEDMAELT…VLAHLEEERD (699 aa)). ATP is bound at residue 178–185 (GESGAGKT). The residue at position 442 (K442) is an N6-acetyllysine. An actin-binding region spans residues 661–683 (LTKLMATLRNTNPNFVRCIIPNH). In terms of domain architecture, IQ spans 786 to 815 (ITDIIIFFQAVCRGYLARKAFAKKQQQLSA). The stretch at 845–1976 (LQVTRQEEEL…INETQPPQSE (1132 aa)) forms a coiled coil. The interval 1126–1149 (DFESEKASRNKAEKQKRDLSEELE) is disordered. Basic and acidic residues predominate over residues 1129 to 1149 (SEKASRNKAEKQKRDLSEELE). The residue at position 1145 (S1145) is a Phosphoserine. An N6-acetyllysine mark is found at K1241, K1301, and K1645. 2 disordered regions span residues 1697 to 1718 (ASSE…DEIA) and 1874 to 1976 (KANA…PQSE). Positions 1698-1708 (SSERARRHAEQ) are enriched in basic and acidic residues. Position 1930 is an omega-N-methylarginine (R1930). 4 positions are modified to phosphoserine: S1935, S1937, S1938, and S1939. R1940 carries the post-translational modification Omega-N-methylarginine. S1952 and S1956 each carry phosphoserine. T1960 carries the phosphothreonine modification. Positions 1967–1976 (INETQPPQSE) are enriched in polar residues. S1975 bears the Phosphoserine mark.

The protein belongs to the TRAFAC class myosin-kinesin ATPase superfamily. Myosin family. Myosin is a hexameric protein that consists of 2 heavy chain subunits (MHC), 2 alkali light chain subunits (MLC) and 2 regulatory light chain subunits (MLC-2). Interacts with PLEKHG6. Interacts with ECPAS. Interacts with KIF26B. Interacts with LARP6. Interacts with MCC. Interacts with CFAP95. In terms of processing, phosphorylated by ABL2.

Its subcellular location is the cell projection. It localises to the lamellipodium. Cellular myosin that appears to play a role in cytokinesis, cell shape, and specialized functions such as secretion and capping. Involved with LARP6 in the stabilization of type I collagen mRNAs for CO1A1 and CO1A2. During cell spreading, plays an important role in cytoskeleton reorganization, focal contacts formation (in the central part but not the margins of spreading cells), and lamellipodial extension; this function is mechanically antagonized by MYH9. This Bos taurus (Bovine) protein is Myosin-10 (MYH10).